The sequence spans 541 residues: Glutamyl-tRNA(Gln) amidotransferase subunit A, chloroplastic/mitochondrial (541 aa).

Active-site charge relay system residues include lysine 121 and serine 196. Serine 220 acts as the Acyl-ester intermediate in catalysis.

It belongs to the amidase family. GatA subfamily. As to quaternary structure, subunit of the heterotrimeric GatCAB amidotransferase (AdT) complex, composed of A, B and C subunits.

Its subcellular location is the mitochondrion. It localises to the plastid. The protein localises to the chloroplast stroma. It catalyses the reaction L-glutamyl-tRNA(Gln) + L-glutamine + ATP + H2O = L-glutaminyl-tRNA(Gln) + L-glutamate + ADP + phosphate + H(+). Allows the formation of correctly charged Gln-tRNA(Gln) through the transamidation of misacylated Glu-tRNA(Gln) in chloroplasts and mitochondria. The reaction takes place in the presence of glutamine and ATP through an activated gamma-phospho-Glu-tRNA(Gln). This chain is Glutamyl-tRNA(Gln) amidotransferase subunit A, chloroplastic/mitochondrial, found in Sorghum bicolor (Sorghum).